We begin with the raw amino-acid sequence, 285 residues long: Bark agglutinin I polypeptide A (285 aa).

The first 31 residues, 1 to 31, serve as a signal peptide directing secretion; it reads MTSYNFKTQTSFPLLLSISFFFLLLLNKVNS. A glycan (N-linked (GlcNAc...) asparagine) is linked at Asn-147. 2 residues coordinate Mn(2+): Glu-156 and Asp-158. Residues Asp-158, Phe-160, Asn-162, and Asp-166 each coordinate Ca(2+). Mn(2+)-binding residues include Asp-166 and His-171. Asn-188 carries an N-linked (GlcNAc...) asparagine glycan.

It belongs to the leguminous lectin family. RPbAI is composed of two polypeptides, A and B, that associate into five different tetrameric isolectins. The A4 combination is the only one devoid of agglutination activity. Isoform B4 displays maximal agglutination activity. Strong expression in seed. Lower levels in the flower, and the bark of the roots. No expression in leaf. The lectin accumulates in the inner bark in autumn.

Its function is as follows. N-acetyl-D-galactosamine specific lectin. Bark lectins are storage protein that probably maintains stocks of nitrogen during dormant period. Self-aggregatable molecules that can bind their own carbohydrate side chains. They could also play a role in the plant's defense against phytophagous invertebrates or herbivorous higher animals. The polypeptide is Bark agglutinin I polypeptide A (Robinia pseudoacacia (Black locust)).